Consider the following 521-residue polypeptide: Caspase-10 (521 aa).

The propeptide occupies 1–219 (MKSQGQHWYS…GEEELVSQTD (219 aa)). DED domains follow at residues 19-97 (SFRE…HLNC) and 114-187 (LFRN…NIEK). 2 stretches are compositionally biased toward polar residues: residues 231-248 (SWQNKHAGSNGNRATNGA) and 259-268 (ASANTLNSET). Positions 231-269 (SWQNKHAGSNGNRATNGAPSLVSRGMQGASANTLNSETS) are disordered. Residues His-358 and Cys-401 contribute to the active site.

It belongs to the peptidase C14A family. Heterotetramer that consists of two anti-parallel arranged heterodimers, each one formed by a 23/17 kDa (p23/17) (depending on the splicing events) and a 12 kDa (p12) subunit. Self-associates. Interacts with FADD and CASP8. Found in a Fas signaling complex consisting of FAS, FADD, CASP8 and CASP10. Interacts with RFFL and RNF34; negatively regulate CASP10 through proteasomal degradation. Interacts with RIOK3. Post-translationally, cleavage by granzyme B and autocatalytic activity generate the two active subunits. Detectable in most tissues. Lowest expression is seen in brain, kidney, prostate, testis and colon.

It catalyses the reaction Strict requirement for Asp at position P1 and has a preferred cleavage sequence of Leu-Gln-Thr-Asp-|-Gly.. Functionally, involved in the activation cascade of caspases responsible for apoptosis execution. Recruited to both Fas- and TNFR-1 receptors in a FADD dependent manner. May participate in the granzyme B apoptotic pathways. Cleaves and activates effector caspases CASP3, CASP4, CASP6, CASP7, CASP8 and CASP9. Hydrolyzes the small- molecule substrates, Tyr-Val-Ala-Asp-|-AMC and Asp-Glu-Val-Asp-|-AMC. In terms of biological role, isoform 7 can enhance NF-kappaB activity but promotes only slight apoptosis. Isoform C is proteolytically inactive. In Homo sapiens (Human), this protein is Caspase-10 (CASP10).